Reading from the N-terminus, the 250-residue chain is Zinc finger protein lsy-27 (250 aa).

2 C2H2-type zinc fingers span residues 25–48 and 52–75; these read FVCS…QLMH and HTCM…RNEH. The segment at 81-104 adopts a C2H2-type 3; degenerate zinc-finger fold; sequence FTCGCCNWTFASKRQLTEHTKCIQ. Disordered stretches follow at residues 126-177 and 226-250; these read IQST…EAER and QKVK…QEIE. The segment covering 148–165 has biased composition (low complexity); sequence SLSPSSSVSTSISSRDAS. Basic and acidic residues predominate over residues 239–250; it reads MIPEKHVKQEIE.

Involved in regulating left/right asymmetric differentiation of the gustatory ASE neurons. Plays a role in modulating expression of LIM/homeobox protein lim-6. The chain is Zinc finger protein lsy-27 from Caenorhabditis elegans.